Here is a 242-residue protein sequence, read N- to C-terminus: Leucyl/phenylalanyl-tRNA--protein transferase (242 aa).

Belongs to the L/F-transferase family.

Its subcellular location is the cytoplasm. The catalysed reaction is N-terminal L-lysyl-[protein] + L-leucyl-tRNA(Leu) = N-terminal L-leucyl-L-lysyl-[protein] + tRNA(Leu) + H(+). It catalyses the reaction N-terminal L-arginyl-[protein] + L-leucyl-tRNA(Leu) = N-terminal L-leucyl-L-arginyl-[protein] + tRNA(Leu) + H(+). It carries out the reaction L-phenylalanyl-tRNA(Phe) + an N-terminal L-alpha-aminoacyl-[protein] = an N-terminal L-phenylalanyl-L-alpha-aminoacyl-[protein] + tRNA(Phe). In terms of biological role, functions in the N-end rule pathway of protein degradation where it conjugates Leu, Phe and, less efficiently, Met from aminoacyl-tRNAs to the N-termini of proteins containing an N-terminal arginine or lysine. The chain is Leucyl/phenylalanyl-tRNA--protein transferase from Edwardsiella ictaluri (strain 93-146).